The following is a 105-amino-acid chain: Probable guanidinium efflux system subunit GdnD (105 aa).

4 helical membrane-spanning segments follow: residues 1–21 (MLHW…VALM), 32–52 (WVLL…YAME), 59–79 (AYAV…ILFY), and 85–105 (AKRI…KILS).

The protein belongs to the drug/metabolite transporter (DMT) superfamily. Small multidrug resistance (SMR) (TC 2.A.7.1) family. YkkC/YkkD subfamily. In terms of assembly, the efflux pump is composed of GdnC and GdnD.

The protein resides in the cell membrane. Probably involved in guanidinium transport. In vitro, confers resistance to a broad range of toxic compounds such as cationic dyes, neutral and anionic antimicrobials. This Bacillus subtilis (strain 168) protein is Probable guanidinium efflux system subunit GdnD.